Here is a 164-residue protein sequence, read N- to C-terminus: MTGIYYLYLRQDDPKKATMRKLERFGLAKRVDIKGVGLKLVLTPYADIFLSREDAVLYEKYGLCVIEGSWNKIDSIKSLKFRIERRLPALLAANPVNYGKIGILSSVEATAAALYIIGYWDTAYALLSKFSWGLNFIKLNENPLNEYSTADRSEIKKIEESYFG.

S-adenosyl-L-methionine contacts are provided by Thr18, Ile66, Leu87, and Ser106.

The protein belongs to the TDD superfamily. TSR3 family.

It localises to the cytoplasm. The enzyme catalyses an N(1)-methylpseudouridine in rRNA + S-adenosyl-L-methionine = N(1)-methyl-N(3)-[(3S)-3-amino-3-carboxypropyl]pseudouridine in rRNA + S-methyl-5'-thioadenosine + H(+). Functionally, aminocarboxypropyltransferase that catalyzes the aminocarboxypropyl transfer on pseudouridine corresponding to position 914 in M.jannaschii 16S rRNA. It constitutes the last step in biosynthesis of the hypermodified N1-methyl-N3-(3-amino-3-carboxypropyl) pseudouridine (m1acp3-Psi). In Thermoplasma volcanium (strain ATCC 51530 / DSM 4299 / JCM 9571 / NBRC 15438 / GSS1), this protein is 16S rRNA aminocarboxypropyltransferase.